A 273-amino-acid chain; its full sequence is Shikimate dehydrogenase (NADP(+)) (273 aa).

Residues 18 to 20 and Thr-65 contribute to the shikimate site; that span reads SKS. The Proton acceptor role is filled by Lys-69. Residue Glu-81 coordinates NADP(+). 2 residues coordinate shikimate: Asn-90 and Asp-105. Residues 130-134, 154-159, and Met-217 each bind NADP(+); these read GAGGA and NRTHSK. Tyr-219 is a shikimate binding site. Gly-240 lines the NADP(+) pocket.

This sequence belongs to the shikimate dehydrogenase family. In terms of assembly, homodimer.

It carries out the reaction shikimate + NADP(+) = 3-dehydroshikimate + NADPH + H(+). The protein operates within metabolic intermediate biosynthesis; chorismate biosynthesis; chorismate from D-erythrose 4-phosphate and phosphoenolpyruvate: step 4/7. Involved in the biosynthesis of the chorismate, which leads to the biosynthesis of aromatic amino acids. Catalyzes the reversible NADPH linked reduction of 3-dehydroshikimate (DHSA) to yield shikimate (SA). This chain is Shikimate dehydrogenase (NADP(+)), found in Janthinobacterium sp. (strain Marseille) (Minibacterium massiliensis).